Reading from the N-terminus, the 217-residue chain is Small ribosomal subunit protein uS3 (217 aa).

The KH type-2 domain maps to 40–110; sequence IRDLINKWFN…EVYINIHEVR (71 aa).

Belongs to the universal ribosomal protein uS3 family. In terms of assembly, part of the 30S ribosomal subunit. Forms a tight complex with proteins S10 and S14.

In terms of biological role, binds the lower part of the 30S subunit head. Binds mRNA in the 70S ribosome, positioning it for translation. The polypeptide is Small ribosomal subunit protein uS3 (Rickettsia prowazekii (strain Madrid E)).